The sequence spans 138 residues: uncharacterized protein (138 aa).

This is an uncharacterized protein from Escherichia coli (strain K12).